A 1567-amino-acid polypeptide reads, in one-letter code: Ice nucleation protein (1567 aa).

The segment covering 130–185 has biased composition (low complexity); sequence PAAEPSAPATQATSATLPTPATPSTQATPSTQSTQSTQSTEATQSTEATPVATVAA. 13 disordered regions span residues 130–195, 270–329, 356–378, 449–474, 502–529, 594–620, 642–668, 689–716, 738–764, 785–810, 833–860, 929–959, and 977–1004; these read PAAE…QQHD, YGST…KGSD, AGSE…GSDV, TQTS…GSDI, SESS…YGST, QTAG…DVTA, QTSG…DVTA, TQTS…DVTA, and TQTS…AGYG. The span at 270–282 shows a compositional bias: polar residues; that stretch reads YGSTQTAQEGSRL. Residues 283 to 296 show a composition bias toward low complexity; that stretch reads TSGYGSTATSGSDS. 4 stretches are compositionally biased toward polar residues: residues 302–325, 356–373, 449–469, and 502–519; these read YGST…QTAR, AGSE…QTAR, TQTS…QTAR, and SESS…AQQD. Low complexity predominate over residues 520–529; the sequence is SSLTTGYGST. Polar residues-rich tracts occupy residues 594–613, 642–661, 689–709, 738–757, 785–805, 833–853, 929–949, and 977–997; these read QTAG…QTAR, QTSG…QTAR, and TQTS…QTAR.

It belongs to the bacterial ice nucleation protein family.

The protein localises to the cell outer membrane. Ice nucleation proteins enable bacteria to nucleate crystallization in supercooled water. This is Ice nucleation protein (inaX) from Xanthomonas campestris pv. translucens.